A 281-amino-acid chain; its full sequence is MNNLPVVRSPWRIVILLLGFTFLYAPMLMLVIYSFNSSKLVTVWAGWSTRWYGELLRDDAMMSAVGLSLTIAACAATAAAILGTIAAVVLVRFGRFRGSNGFAFMITAPLVMPDVITGLSLLLLFVALAHAIGWPADRGMLTIWLAHVTFCTAYVAVVISSRLRELDRSIEEAAMDLGATPLKVFFVITLPMIMPAIISGWLLAFTLSLDDLVIASFVSGPGATTLPMLVFSSVRMGVNPEINALATLILGAVGIVGFIAWYLMARAEKQRIRDIQRARRG.

Over 1-13 (MNNLPVVRSPWRI) the chain is Cytoplasmic. A helical membrane pass occupies residues 14-33 (VILLLGFTFLYAPMLMLVIY). Over 34–68 (SFNSSKLVTVWAGWSTRWYGELLRDDAMMSAVGLS) the chain is Periplasmic. One can recognise an ABC transmembrane type-1 domain in the interval 65 to 260 (VGLSLTIAAC…GAVGIVGFIA (196 aa)). A helical membrane pass occupies residues 69–88 (LTIAACAATAAAILGTIAAV). Topologically, residues 89–115 (VLVRFGRFRGSNGFAFMITAPLVMPDV) are cytoplasmic. The chain crosses the membrane as a helical span at residues 116–135 (ITGLSLLLLFVALAHAIGWP). Topologically, residues 136–140 (ADRGM) are periplasmic. The chain crosses the membrane as a helical span at residues 141–160 (LTIWLAHVTFCTAYVAVVIS). Over 161 to 186 (SRLRELDRSIEEAAMDLGATPLKVFF) the chain is Cytoplasmic. Residues 187–206 (VITLPMIMPAIISGWLLAFT) traverse the membrane as a helical segment. The Periplasmic segment spans residues 207–243 (LSLDDLVIASFVSGPGATTLPMLVFSSVRMGVNPEIN). The helical transmembrane segment at 244-263 (ALATLILGAVGIVGFIAWYL) threads the bilayer. At 264–281 (MARAEKQRIRDIQRARRG) the chain is on the cytoplasmic side.

Belongs to the binding-protein-dependent transport system permease family. CysTW subfamily. In terms of assembly, the complex is composed of two ATP-binding proteins (PotG), two transmembrane proteins (PotH and PotI) and a solute-binding protein (PotF).

It localises to the cell inner membrane. Part of the ABC transporter complex PotFGHI involved in putrescine uptake. Responsible for the translocation of the substrate across the membrane. The chain is Putrescine transport system permease protein PotI from Escherichia coli O6:H1 (strain CFT073 / ATCC 700928 / UPEC).